Reading from the N-terminus, the 306-residue chain is Voltage-dependent anion channel-forming protein RSc3414 (306 aa).

Transmembrane regions (helical) follow at residues 28 to 48, 50 to 70, 213 to 233, and 239 to 259; these read LFLIFCISLVAMAVHVHWLPI, VNLSTTPFSLIGIALAVFLGF, YSVMIHRTVYFFCAALPFGLV, and FTPVFSVFVAYAFMAHEAIAA.

The protein belongs to the anion channel-forming bestrophin (TC 1.A.46) family.

It is found in the cell membrane. The sequence is that of Voltage-dependent anion channel-forming protein RSc3414 from Ralstonia nicotianae (strain ATCC BAA-1114 / GMI1000) (Ralstonia solanacearum).